The following is a 207-amino-acid chain: Large ribosomal subunit protein uL4 (207 aa).

Residues phenylalanine 56–serine 77 are disordered. Positions lysine 63–serine 77 are enriched in basic residues.

Belongs to the universal ribosomal protein uL4 family. As to quaternary structure, part of the 50S ribosomal subunit.

Functionally, one of the primary rRNA binding proteins, this protein initially binds near the 5'-end of the 23S rRNA. It is important during the early stages of 50S assembly. It makes multiple contacts with different domains of the 23S rRNA in the assembled 50S subunit and ribosome. Forms part of the polypeptide exit tunnel. This Phytoplasma australiense protein is Large ribosomal subunit protein uL4.